We begin with the raw amino-acid sequence, 85 residues long: RNA-binding protein Hfq (85 aa).

A Sm domain is found at 11 to 71 (DTFLNHVRKS…ISTIMPGHPV (61 aa)).

Belongs to the Hfq family. As to quaternary structure, homohexamer.

Its function is as follows. RNA chaperone that binds small regulatory RNA (sRNAs) and mRNAs to facilitate mRNA translational regulation in response to envelope stress, environmental stress and changes in metabolite concentrations. Also binds with high specificity to tRNAs. Seems to be involved in the regulation of NifA. This Azorhizobium caulinodans (strain ATCC 43989 / DSM 5975 / JCM 20966 / LMG 6465 / NBRC 14845 / NCIMB 13405 / ORS 571) protein is RNA-binding protein Hfq.